The chain runs to 843 residues: Protein P (843 aa).

The interval 1–177 is terminal protein domain (TP); it reads MPLSYQHFRK…FCGSPYSWEQ (177 aa). Residues 178–346 form a spacer region; sequence DLQHGRLVFQ…YCLSHIVNLI (169 aa). The disordered stretch occupies residues 219–269; the sequence is RKSRLGPQPAQGQLAGRQQGGSGSIRARVHPSPWGTVGVEPSGSGPTHNCA. Over residues 223–235 the composition is skewed to low complexity; it reads LGPQPAQGQLAGR. The tract at residues 347 to 690 is polymerase/reverse transcriptase domain (RT); sequence EDWGPCTEHG…YLNLYPVARQ (344 aa). Positions 357–600 constitute a Reverse transcriptase domain; sequence EHRIRTPRTP…YSLNFMGYVI (244 aa). The Mg(2+) site is built by Asp-429, Asp-551, and Asp-552.

The protein belongs to the hepadnaviridae P protein family.

The enzyme catalyses DNA(n) + a 2'-deoxyribonucleoside 5'-triphosphate = DNA(n+1) + diphosphate. The catalysed reaction is Endonucleolytic cleavage to 5'-phosphomonoester.. Its activity is regulated as follows. Activated by host HSP70 and HSP40 in vitro to be able to bind the epsilon loop of the pgRNA. Because deletion of the RNase H region renders the protein partly chaperone-independent, the chaperones may be needed indirectly to relieve occlusion of the RNA-binding site by this domain. Inhibited by several reverse-transcriptase inhibitors: Lamivudine, Adefovir and Entecavir. In terms of biological role, multifunctional enzyme that converts the viral RNA genome into dsDNA in viral cytoplasmic capsids. This enzyme displays a DNA polymerase activity that can copy either DNA or RNA templates, and a ribonuclease H (RNase H) activity that cleaves the RNA strand of RNA-DNA heteroduplexes in a partially processive 3'- to 5'-endonucleasic mode. Neo-synthesized pregenomic RNA (pgRNA) are encapsidated together with the P protein, and reverse-transcribed inside the nucleocapsid. Initiation of reverse-transcription occurs first by binding the epsilon loop on the pgRNA genome, and is initiated by protein priming, thereby the 5'-end of (-)DNA is covalently linked to P protein. Partial (+)DNA is synthesized from the (-)DNA template and generates the relaxed circular DNA (RC-DNA) genome. After budding and infection, the RC-DNA migrates in the nucleus, and is converted into a plasmid-like covalently closed circular DNA (cccDNA). The activity of P protein does not seem to be necessary for cccDNA generation, and is presumably released from (+)DNA by host nuclear DNA repair machinery. This Hepatitis B virus genotype B2 subtype adw (isolate China/patient4/1996) (HBV-B) protein is Protein P.